Reading from the N-terminus, the 395-residue chain is Flagellin A (395 aa).

It belongs to the bacterial flagellin family.

Its subcellular location is the secreted. The protein resides in the bacterial flagellum. Flagellin is the subunit protein which polymerizes to form the filaments of bacterial flagella. Homomer of FlaA is able to form a functional filament. This is Flagellin A (flaA) from Rhizobium meliloti (Ensifer meliloti).